A 40-amino-acid polypeptide reads, in one-letter code: Photosystem II reaction center protein J (40 aa).

A helical membrane pass occupies residues 8–28; sequence IPLWVVATIAGLGVITVVGIF.

It belongs to the PsbJ family. In terms of assembly, PSII is composed of 1 copy each of membrane proteins PsbA, PsbB, PsbC, PsbD, PsbE, PsbF, PsbH, PsbI, PsbJ, PsbK, PsbL, PsbM, PsbT, PsbX, PsbY, PsbZ, Psb30/Ycf12, peripheral proteins PsbO, CyanoQ (PsbQ), PsbU, PsbV and a large number of cofactors. It forms dimeric complexes.

The protein localises to the cellular thylakoid membrane. Its function is as follows. One of the components of the core complex of photosystem II (PSII). PSII is a light-driven water:plastoquinone oxidoreductase that uses light energy to abstract electrons from H(2)O, generating O(2) and a proton gradient subsequently used for ATP formation. It consists of a core antenna complex that captures photons, and an electron transfer chain that converts photonic excitation into a charge separation. The chain is Photosystem II reaction center protein J from Nostoc sp. (strain PCC 7120 / SAG 25.82 / UTEX 2576).